The following is a 508-amino-acid chain: RanBP-type and C3HC4-type zinc finger-containing protein 1 (508 aa).

N-acetylmethionine is present on Met1. The interval 1-218 (MDEKTKKAEE…PGCEMCCRAR (218 aa)) is interaction with IRF3. Positions 1-268 (MDEKTKKAEE…NYLQHVQLEQ (268 aa)) are interaction with TAB2. Position 50 is a phosphoserine (Ser50). Residues 55-119 (IRLCVSVEDA…DQETLHSHGI (65 aa)) form the Ubiquitin-like domain. Positions 69-131 (VTIWLTVRPD…NGDSAYLYLL (63 aa)) are interaction with RNF31. The segment at 161–191 (TLQPRGPLEPVLPKPRTHQETGQPDAAPESP) is disordered. The RanBP2-type zinc-finger motif lies at 188-220 (PESPPVGWQCPGCTFINKPTRPGCEMCCRARPE). Residues 231–260 (DEEERARLAGEEEALRQYEQRKQQQQEGNY) are a coiled coil. Residues 276 to 504 (EPAECPVCYS…VNGIPCHPSC (229 aa)) are TRIAD supradomain. Cys280, Cys283, Cys298, His300, Cys303, Cys306, and Cys321 together coordinate Zn(2+). The RING-type 1 zinc finger occupies 280 to 330 (CPVCYSVLAPGEAVVLRECLHTFCRECLQGTIRNSQEAEVSCPFIDNTYSC). At Tyr328 the chain carries Phosphotyrosine. The Zn(2+) site is built by Cys330, Cys369, Cys374, Cys389, Cys392, Cys397, Cys400, His404, Cys409, Cys445, and Cys448. Residues 349 to 409 (QRFLDLGVSI…CKAIHERMNC (61 aa)) form an IBR-type zinc finger. Residues 445 to 474 (CPQCRIVVQKKDGCDWIRCTVCHTEICWVT) form an RING-type 2; atypical zinc finger. Residue Cys458 is part of the active site. Residues Cys463 and Cys466 each contribute to the Zn(2+) site.

Belongs to the RBR family. In terms of assembly, component of the LUBAC complex (linear ubiquitin chain assembly complex) which consists of SHARPIN, RBCK1 and RNF31. LUBAC has a MW of approximately 600 kDa suggesting a heteromultimeric assembly of its subunits. Interacts with beta-I-type (PRKCB1) and zeta-type protein kinase C (PRKCZ). Interacts with UBE2L3. Interacts with IREB2 only in iron-rich conditions. Associates with the TNF-R1 signaling complex (TNF-RSC) in a stimulation-dependent manner. Interacts with EYA1, TAB2, TAB3, MAP3K7 TRAF6 and RIPK1. Interacts with IRF3. Post-translationally, auto-ubiquitinated. Auto-ubiquitination leads to degradation by the proteasome. In terms of processing, phosphorylated. In vitro, phosphorylation inhibits auto-ubiquitination activity. In terms of tissue distribution, widely expressed.

It carries out the reaction [E2 ubiquitin-conjugating enzyme]-S-ubiquitinyl-L-cysteine + [acceptor protein]-L-lysine = [E2 ubiquitin-conjugating enzyme]-L-cysteine + [acceptor protein]-N(6)-ubiquitinyl-L-lysine.. The protein operates within protein modification; protein ubiquitination. Functionally, E3 ubiquitin-protein ligase, which accepts ubiquitin from specific E2 ubiquitin-conjugating enzymes, such as UBE2L3/UBCM4, and then transfers it to substrates. Functions as an E3 ligase for oxidized IREB2 and both heme and oxygen are necessary for IREB2 ubiquitination. Promotes ubiquitination of TAB2 and IRF3 and their degradation by the proteasome. Component of the LUBAC complex which conjugates linear ('Met-1'-linked) polyubiquitin chains to substrates and plays a key role in NF-kappa-B activation and regulation of inflammation. LUBAC conjugates linear polyubiquitin to IKBKG and RIPK1 and is involved in activation of the canonical NF-kappa-B and the JNK signaling pathways. Linear ubiquitination mediated by the LUBAC complex interferes with TNF-induced cell death and thereby prevents inflammation. LUBAC is recruited to the TNF-R1 signaling complex (TNF-RSC) following polyubiquitination of TNF-RSC components by BIRC2 and/or BIRC3 and to conjugate linear polyubiquitin to IKBKG and possibly other components contributing to the stability of the complex. The LUBAC complex is also involved in innate immunity by conjugating linear polyubiquitin chains at the surface of bacteria invading the cytosol to form the ubiquitin coat surrounding bacteria. LUBAC is not able to initiate formation of the bacterial ubiquitin coat, and can only promote formation of linear polyubiquitins on pre-existing ubiquitin. The bacterial ubiquitin coat acts as an 'eat-me' signal for xenophagy and promotes NF-kappa-B activation. Together with OTULIN, the LUBAC complex regulates the canonical Wnt signaling during angiogenesis. Binds polyubiquitin of different linkage types. This chain is RanBP-type and C3HC4-type zinc finger-containing protein 1 (Rbck1), found in Rattus norvegicus (Rat).